Reading from the N-terminus, the 208-residue chain is Flavin-dependent thymidylate synthase (208 aa).

Residues 1 to 208 (MEVICKHYTP…QYLFEDCLKH (208 aa)) enclose the ThyX domain. FAD is bound by residues Ser-50 and 74-76 (RHR). Residues 71–74 (ELSR), 84–86 (SSR), and Lys-147 each bind dUMP. The ThyX motif signature appears at 74 to 84 (RHRIASLSVKS). Residues 163 to 165 (NAR) and Asn-169 contribute to the FAD site. Arg-174 is a binding site for dUMP. Catalysis depends on Arg-174, which acts as the Involved in ionization of N3 of dUMP, leading to its activation.

Belongs to the thymidylate synthase ThyX family. In terms of assembly, homotetramer. FAD serves as cofactor.

The catalysed reaction is dUMP + (6R)-5,10-methylene-5,6,7,8-tetrahydrofolate + NADPH + H(+) = dTMP + (6S)-5,6,7,8-tetrahydrofolate + NADP(+). It participates in pyrimidine metabolism; dTTP biosynthesis. Its function is as follows. Catalyzes the reductive methylation of 2'-deoxyuridine-5'-monophosphate (dUMP) to 2'-deoxythymidine-5'-monophosphate (dTMP) while utilizing 5,10-methylenetetrahydrofolate (mTHF) as the methyl donor, and NADPH and FADH(2) as the reductant. The polypeptide is Flavin-dependent thymidylate synthase (Helicobacter pylori (strain J99 / ATCC 700824) (Campylobacter pylori J99)).